The sequence spans 296 residues: UPF0761 membrane protein YE0031 (296 aa).

7 consecutive transmembrane segments (helical) span residues 44–64, 67–87, 108–128, 136–156, 185–205, 212–232, and 246–266; these read LLSL…FPMF, ISIK…GDII, GLIV…NIIW, LVFS…LVGA, LFPL…VPTV, ALIG…GFTM, and VLAV…IVLL.

It belongs to the UPF0761 family.

The protein resides in the cell inner membrane. The polypeptide is UPF0761 membrane protein YE0031 (Yersinia enterocolitica serotype O:8 / biotype 1B (strain NCTC 13174 / 8081)).